We begin with the raw amino-acid sequence, 214 residues long: Pyrrolidone-carboxylate peptidase (214 aa).

Catalysis depends on residues Glu-80, Cys-143, and His-166.

This sequence belongs to the peptidase C15 family. Homotetramer.

The protein resides in the cytoplasm. The enzyme catalyses Release of an N-terminal pyroglutamyl group from a polypeptide, the second amino acid generally not being Pro.. In terms of biological role, removes 5-oxoproline from various penultimate amino acid residues except L-proline. This is Pyrrolidone-carboxylate peptidase from Escherichia fergusonii (strain ATCC 35469 / DSM 13698 / CCUG 18766 / IAM 14443 / JCM 21226 / LMG 7866 / NBRC 102419 / NCTC 12128 / CDC 0568-73).